The primary structure comprises 108 residues: Phosphoribosyl-ATP pyrophosphatase (108 aa).

This sequence belongs to the PRA-PH family.

It is found in the cytoplasm. The catalysed reaction is 1-(5-phospho-beta-D-ribosyl)-ATP + H2O = 1-(5-phospho-beta-D-ribosyl)-5'-AMP + diphosphate + H(+). Its pathway is amino-acid biosynthesis; L-histidine biosynthesis; L-histidine from 5-phospho-alpha-D-ribose 1-diphosphate: step 2/9. The chain is Phosphoribosyl-ATP pyrophosphatase from Chromobacterium violaceum (strain ATCC 12472 / DSM 30191 / JCM 1249 / CCUG 213 / NBRC 12614 / NCIMB 9131 / NCTC 9757 / MK).